Consider the following 644-residue polypeptide: MAILAWLEPRPLLAVLVLVLTMRMAQPAHLLTLLSSGQGALDRVALGGLLNTLAARVHCTSGPCGKCLSVDDLLALGRPEEPGHLARLSAAAALYLSDPEGTCEDIRAGRWASRADHLLALLEGPKALAPGLSRLLQRIQAQTTGQPSAGEACVDPPQLLREAGVAGAPGSPGPVLATLLEHVGRGSCFHTLPTPQYFVDFVFQQSHGNTPNISVAELAALMQRLGVGGVTETHSDHHHQEKRVNRQGPTPLTAPNSSSDTWDTVCLSARDVMAVYGLSEQTGVTPEAWAQLSPALLQQQLSGACSPQPSHPAQNQLSQAEKYLYGSLATLLICLCSTFGLLLLTCAACSTAAHYVIQTFLGMAVGALTGDALLHLTPKVLGLHQHGGDSEHRADSHGPQTTWRLVVALSGLYVFFLFEKLCDLLLPQDPEDRKGTPRSHSGHSHGMSLQLAPRELRPPKQPHEGSRADLVAEESPELLSPEPRRKSPELRLLPYMITLGDGLHNFADGLAVGAAFASSWKTGLATSLAVFCHEVPHELGDFAALLHAGLPVSRALLLNLASGLTAFAGLYVALALGVGEESESWTLAVAIGLFLYVALCDMLPAMLNVRDPRPWLLFLLHNVGLLGGWAVLLLLSLYEDSIAL.

The signal sequence occupies residues 1 to 27 (MAILAWLEPRPLLAVLVLVLTMRMAQP). Residues 28–323 (AHLLTLLSSG…QNQLSQAEKY (296 aa)) are Extracellular-facing. Intrachain disulfides connect Cys59–Cys64, Cys67–Cys103, and Cys153–Cys188. The tract at residues 231–259 (TETHSDHHHQEKRVNRQGPTPLTAPNSSS) is disordered. Over residues 233-244 (THSDHHHQEKRV) the composition is skewed to basic and acidic residues. Residues 247–259 (QGPTPLTAPNSSS) show a composition bias toward polar residues. Cys266 and Cys305 are disulfide-bonded. The chain crosses the membrane as a helical span at residues 324-344 (LYGSLATLLICLCSTFGLLLL). Residues 345 to 355 (TCAACSTAAHY) are Cytoplasmic-facing. The helical transmembrane segment at 356–376 (VIQTFLGMAVGALTGDALLHL) threads the bilayer. Residues 377–404 (TPKVLGLHQHGGDSEHRADSHGPQTTWR) lie on the Extracellular side of the membrane. A helical transmembrane segment spans residues 405–425 (LVVALSGLYVFFLFEKLCDLL). Topologically, residues 426–495 (LPQDPEDRKG…KSPELRLLPY (70 aa)) are cytoplasmic. An Essential for SLC39A4 endocytosis motif is present at residues 449 to 451 (LQL). The segment covering 456 to 467 (LRPPKQPHEGSR) has biased composition (basic and acidic residues). Positions 456 to 484 (LRPPKQPHEGSRADLVAEESPELLSPEPR) are disordered. The chain crosses the membrane as a helical span at residues 496-515 (MITLGDGLHNFADGLAVGAA). Zn(2+) contacts are provided by His504, Asn505, and Asp508. The Extracellular portion of the chain corresponds to 516–523 (FASSWKTG). Residues 524–550 (LATSLAVFCHEVPHELGDFAALLHAGL) traverse the membrane as a helical segment. 3 residues coordinate Zn(2+): His533, Glu534, and His537. Over 551 to 555 (PVSRA) the chain is Cytoplasmic. The chain crosses the membrane as a helical span at residues 556 to 576 (LLLNLASGLTAFAGLYVALAL). Residues 577 to 583 (GVGEESE) are Extracellular-facing. Residues 584–604 (SWTLAVAIGLFLYVALCDMLP) form a helical membrane-spanning segment. The Cytoplasmic portion of the chain corresponds to 605 to 614 (AMLNVRDPRP). The chain crosses the membrane as a helical span at residues 615–635 (WLLFLLHNVGLLGGWAVLLLL). Topologically, residues 636–644 (SLYEDSIAL) are extracellular.

It belongs to the ZIP transporter (TC 2.A.5) family. In terms of assembly, homodimer. Post-translationally, the extracellular N-terminal ectodomain is cleaved when cells are Zn(2+) deficient, N-terminally cleaved SLC39A4 is internalized at a faster rate. In terms of processing, under excess Zn(2+) conditions, SLC39A4 on the cell surface is rapidly endocytosed, ubiquitinated and degraded. Glycosylated.

The protein resides in the cell membrane. It is found in the recycling endosome membrane. The protein localises to the apical cell membrane. It catalyses the reaction Zn(2+)(in) = Zn(2+)(out). Selective transporter that mediates the uptake of Zn(2+). Plays an essential role for dietary zinc uptake from small intestine. The Zn(2+) uniporter activity is regulated by zinc availability. Also exhibits polyspecific binding and transport of Cu(2+), Cd(2+) and possibly Ni(2+) but at higher concentrations. This chain is Zinc transporter ZIP4, found in Pteropus alecto (Black flying fox).